The following is a 454-amino-acid chain: Glutamate mutase epsilon subunit (454 aa).

An L-glutamate-binding site is contributed by R67. G69 lines the adenosylcob(III)alamin pocket. Position 99 (R99) interacts with L-glutamate. N122 provides a ligand contact to adenosylcob(III)alamin. L-glutamate-binding positions include 148-149, E170, and Y176; that span reads RH. Residue P179 participates in adenosylcob(III)alamin binding. Y180 is an L-glutamate binding site. The adenosylcob(III)alamin site is built by F296, K325, E329, and I333.

The protein belongs to the methylaspartate mutase GlmE subunit family. Heterotetramer composed of 2 epsilon subunits (GlmE) and 2 sigma subunits (GlmS). GlmE exists as a homodimer and GlmS as a monomer. Requires adenosylcob(III)alamin as cofactor.

The catalysed reaction is (2S,3S)-3-methyl-L-aspartate = L-glutamate. It functions in the pathway amino-acid degradation; L-glutamate degradation via mesaconate pathway; acetate and pyruvate from L-glutamate: step 1/4. In terms of biological role, catalyzes the carbon skeleton rearrangement of L-glutamate to L-threo-3-methylaspartate ((2S,3S)-3-methylaspartate). This Shigella dysenteriae serotype 1 (strain Sd197) protein is Glutamate mutase epsilon subunit.